Reading from the N-terminus, the 242-residue chain is Arginine transport ATP-binding protein ArtP (242 aa).

The region spanning 3 to 241 is the ABC transporter domain; it reads IQLNGINCFY…QTEAFKNYLS (239 aa). 35–42 serves as a coordination point for ATP; that stretch reads GPSGAGKS.

Belongs to the ABC transporter superfamily. In terms of assembly, the complex is composed of two ATP-binding proteins (ArtP), two transmembrane proteins (ArtM and ArtQ) and two solute-binding proteins (ArtJ and ArtI).

Its subcellular location is the cell inner membrane. It catalyses the reaction a polar amino acid(out) + ATP + H2O = a polar amino acid(in) + ADP + phosphate + H(+). The enzyme catalyses L-arginine(out) + ATP + H2O = L-arginine(in) + ADP + phosphate + H(+). Part of the ABC transporter complex ArtPIQMJ involved in arginine transport. Probably responsible for energy coupling to the transport system. The polypeptide is Arginine transport ATP-binding protein ArtP (artP) (Escherichia coli O157:H7).